The following is a 443-amino-acid chain: Protein king tubby (443 aa).

Disordered regions lie at residues 57–80 and 98–191; these read TNGS…NNMR and HELE…EGDV. Residues 68-80 show a composition bias toward polar residues; the sequence is AMNTSRNHSNNMR. Over residues 113 to 128 the composition is skewed to low complexity; that stretch reads QHQQSASHSANSTQSQ. Phosphoserine is present on S136. Residues 177–186 are compositionally biased toward gly residues; sequence NGTGNGTGGE.

It belongs to the TUB family.

It localises to the cytoplasm. The protein localises to the nucleus. The protein resides in the cell projection. It is found in the cilium membrane. Its subcellular location is the rhabdomere. This chain is Protein king tubby, found in Drosophila simulans (Fruit fly).